Here is a 75-residue protein sequence, read N- to C-terminus: Small ribosomal subunit protein bS18 (75 aa).

This sequence belongs to the bacterial ribosomal protein bS18 family. As to quaternary structure, part of the 30S ribosomal subunit. Forms a tight heterodimer with protein bS6.

Its function is as follows. Binds as a heterodimer with protein bS6 to the central domain of the 16S rRNA, where it helps stabilize the platform of the 30S subunit. This chain is Small ribosomal subunit protein bS18, found in Yersinia enterocolitica serotype O:8 / biotype 1B (strain NCTC 13174 / 8081).